The sequence spans 378 residues: Erythronate-4-phosphate dehydrogenase (378 aa).

Residues S45 and T66 each contribute to the substrate site. Residues D146 and T175 each coordinate NAD(+). R208 is an active-site residue. D232 contributes to the NAD(+) binding site. E237 is a catalytic residue. Catalysis depends on H254, which acts as the Proton donor. G257 serves as a coordination point for NAD(+). A substrate-binding site is contributed by Y258.

Belongs to the D-isomer specific 2-hydroxyacid dehydrogenase family. PdxB subfamily. Homodimer.

The protein localises to the cytoplasm. It carries out the reaction 4-phospho-D-erythronate + NAD(+) = (R)-3-hydroxy-2-oxo-4-phosphooxybutanoate + NADH + H(+). The protein operates within cofactor biosynthesis; pyridoxine 5'-phosphate biosynthesis; pyridoxine 5'-phosphate from D-erythrose 4-phosphate: step 2/5. Catalyzes the oxidation of erythronate-4-phosphate to 3-hydroxy-2-oxo-4-phosphonooxybutanoate. The polypeptide is Erythronate-4-phosphate dehydrogenase (Escherichia coli (strain ATCC 8739 / DSM 1576 / NBRC 3972 / NCIMB 8545 / WDCM 00012 / Crooks)).